The primary structure comprises 357 residues: tRNA N6-adenosine threonylcarbamoyltransferase (357 aa).

The Fe cation site is built by H115 and H119. Substrate is bound by residues 137–141, D170, G183, and N281; that span reads LASGG. Residue D309 coordinates Fe cation.

The protein belongs to the KAE1 / TsaD family. It depends on Fe(2+) as a cofactor.

The protein localises to the cytoplasm. It catalyses the reaction L-threonylcarbamoyladenylate + adenosine(37) in tRNA = N(6)-L-threonylcarbamoyladenosine(37) in tRNA + AMP + H(+). Functionally, required for the formation of a threonylcarbamoyl group on adenosine at position 37 (t(6)A37) in tRNAs that read codons beginning with adenine. Is involved in the transfer of the threonylcarbamoyl moiety of threonylcarbamoyl-AMP (TC-AMP) to the N6 group of A37, together with TsaE and TsaB. TsaD likely plays a direct catalytic role in this reaction. This Afipia carboxidovorans (strain ATCC 49405 / DSM 1227 / KCTC 32145 / OM5) (Oligotropha carboxidovorans) protein is tRNA N6-adenosine threonylcarbamoyltransferase.